A 955-amino-acid polypeptide reads, in one-letter code: Thrombospondin-4 (955 aa).

Positions 1–24 are cleaved as a signal peptide; it reads MPRRKGLCLFLQMLLLHLYGVCQA. A Laminin G-like domain is found at 25-192; sequence QPNYQVFDLL…MDELKLVMGG (168 aa). In terms of domain architecture, EGF-like 1 spans 281–320; that stretch reads PKPRCDATSCFRGVRCIDTEGGFQCGPCPEGYTGNGVICT. 21 cysteine pairs are disulfide-bonded: Cys285/Cys296, Cys290/Cys305, Cys308/Cys319, Cys325/Cys336, Cys330/Cys345, Cys348/Cys372, Cys378/Cys392, Cys386/Cys401, Cys404/Cys416, Cys422/Cys435, Cys429/Cys445, Cys447/Cys458, Cys474/Cys479, Cys484/Cys504, Cys520/Cys540, Cys543/Cys563, Cys579/Cys599, Cys602/Cys622, Cys640/Cys660, Cys680/Cys700, and Cys716/Cys937. The EGF-like 2; calcium-binding domain occupies 321 to 358; it reads DVDECRLNPCFLGVRCINTSPGFKCESCPPGYTGSTIQ. Residues 374–415 enclose the EGF-like 3; calcium-binding domain; sequence DTNECENGRNGGCTSNSLCINTMGSFRCGGCKPGYVGDQIKG. The region spanning 418-459 is the EGF-like 4 domain; that stretch reads PEKSCRHGQNPCHASAQCSEEKDGDVTCTCSVGWAGNGYLCG. 8 TSP type-3 repeats span residues 460-492, 493-528, 529-551, 552-587, 588-610, 611-648, 649-688, and 689-724; these read KDTDIDGYPDEALPCPDKNCKKDNCVYVPNSGQ, EDTDKDNIGDACDEDADGDGILNEQDNCVLAANIDQ, KNSDQDIFGDACDNCRLTLNNDQ, RDTDNDGKGDACDDDMDGDGIKNILDNCQRVPNVDQ, KDKDGDGVGDICDSCPDIINPNQ, SDIDNDLVGDSCDTNQDSDGDGHQDSTDNCPTVINSNQ, LDTDKDGIGDECDDDDDNDGIPDTVPPGPDNCKLVPNPGQ, and EDDNNDGVGDVCEADFDQDTVIDRIDVCPENAEITL. Asn609 is a glycosylation site (N-linked (GlcNAc...) asparagine). Positions 610–678 are disordered; it reads QSDIDNDLVG…IPDTVPPGPD (69 aa). Residues 637–649 are compositionally biased toward polar residues; the sequence is TDNCPTVINSNQL. The segment covering 657 to 668 has biased composition (acidic residues); it reads GDECDDDDDNDG. The region spanning 728–942 is the TSP C-terminal domain; it reads RAYQTVVLDP…LKYRCNDTIP (215 aa). N-linked (GlcNAc...) asparagine glycosylation occurs at Asn938.

The protein belongs to the thrombospondin family. In terms of assembly, homotrimer; disulfide-linked.

It is found in the endoplasmic reticulum. Its subcellular location is the sarcoplasmic reticulum. The protein localises to the secreted. It localises to the extracellular space. The protein resides in the extracellular matrix. Functionally, adhesive glycoprotein that mediates cell-to-cell and cell-to-matrix interactions and may be involved in various processes including cellular proliferation, migration, adhesion and attachment. May play a role in ER stress response. May participate in the genesis and function of cardiac and skeletal muscle. This Xenopus laevis (African clawed frog) protein is Thrombospondin-4 (thbs4).